The chain runs to 138 residues: Mu-like prophage FluMu G protein 2 (138 aa).

The protein to phage Mu protein G.

This Haemophilus influenzae (strain ATCC 51907 / DSM 11121 / KW20 / Rd) protein is Mu-like prophage FluMu G protein 2.